A 257-amino-acid chain; its full sequence is Glutamate racemase (257 aa).

Substrate is bound by residues 12 to 13 and 44 to 45; these read DS and YG. The active-site Proton donor/acceptor is C75. 76-77 lines the substrate pocket; that stretch reads NT. The active-site Proton donor/acceptor is the C186. Residue 187–188 coordinates substrate; sequence TH.

It belongs to the aspartate/glutamate racemases family.

The enzyme catalyses L-glutamate = D-glutamate. Its pathway is cell wall biogenesis; peptidoglycan biosynthesis. In terms of biological role, provides the (R)-glutamate required for cell wall biosynthesis. This is Glutamate racemase from Clostridium kluyveri (strain NBRC 12016).